The chain runs to 97 residues: Co-chaperonin GroES (97 aa).

It belongs to the GroES chaperonin family. In terms of assembly, heptamer of 7 subunits arranged in a ring. Interacts with the chaperonin GroEL.

The protein resides in the cytoplasm. Together with the chaperonin GroEL, plays an essential role in assisting protein folding. The GroEL-GroES system forms a nano-cage that allows encapsulation of the non-native substrate proteins and provides a physical environment optimized to promote and accelerate protein folding. GroES binds to the apical surface of the GroEL ring, thereby capping the opening of the GroEL channel. The chain is Co-chaperonin GroES from Serratia proteamaculans (strain 568).